Consider the following 302-residue polypeptide: Sulfate adenylyltransferase subunit 2 (302 aa).

It belongs to the PAPS reductase family. CysD subfamily. Heterodimer composed of CysD, the smaller subunit, and CysN.

The catalysed reaction is sulfate + ATP + H(+) = adenosine 5'-phosphosulfate + diphosphate. It functions in the pathway sulfur metabolism; hydrogen sulfide biosynthesis; sulfite from sulfate: step 1/3. In terms of biological role, with CysN forms the ATP sulfurylase (ATPS) that catalyzes the adenylation of sulfate producing adenosine 5'-phosphosulfate (APS) and diphosphate, the first enzymatic step in sulfur assimilation pathway. APS synthesis involves the formation of a high-energy phosphoric-sulfuric acid anhydride bond driven by GTP hydrolysis by CysN coupled to ATP hydrolysis by CysD. The protein is Sulfate adenylyltransferase subunit 2 of Bacteroides thetaiotaomicron (strain ATCC 29148 / DSM 2079 / JCM 5827 / CCUG 10774 / NCTC 10582 / VPI-5482 / E50).